The chain runs to 212 residues: Orotate phosphoribosyltransferase (212 aa).

Residues arginine 97, lysine 101, histidine 103, and glutamate 123 to serine 131 each bind 5-phospho-alpha-D-ribose 1-diphosphate. Position 127 (serine 127) interacts with orotate.

This sequence belongs to the purine/pyrimidine phosphoribosyltransferase family. PyrE subfamily. As to quaternary structure, homodimer. Mg(2+) is required as a cofactor.

The enzyme catalyses orotidine 5'-phosphate + diphosphate = orotate + 5-phospho-alpha-D-ribose 1-diphosphate. It functions in the pathway pyrimidine metabolism; UMP biosynthesis via de novo pathway; UMP from orotate: step 1/2. Functionally, catalyzes the transfer of a ribosyl phosphate group from 5-phosphoribose 1-diphosphate to orotate, leading to the formation of orotidine monophosphate (OMP). This is Orotate phosphoribosyltransferase from Phocaeicola vulgatus (strain ATCC 8482 / DSM 1447 / JCM 5826 / CCUG 4940 / NBRC 14291 / NCTC 11154) (Bacteroides vulgatus).